The chain runs to 287 residues: uncharacterized protein (287 aa).

Transmembrane regions (helical) follow at residues 7–28 (LLLT…RAAL), 32–54 (AIDA…AVLL), 67–86 (GWRG…YAYV), 91–113 (GTGA…LLRG), 120–139 (ALLG…LPGA), 144–163 (LGGA…YTLL), 170–192 (PLAV…LLAF), 202–224 (GLAY…WYSA), 231–253 (IQGA…LLLG), and 263–280 (ATLA…PRLG). EamA domains lie at 15 to 136 (LAFA…FLLL) and 155 to 276 (LAWG…LILA).

It localises to the cell membrane. This is an uncharacterized protein from Pseudomonas aeruginosa (strain ATCC 15692 / DSM 22644 / CIP 104116 / JCM 14847 / LMG 12228 / 1C / PRS 101 / PAO1).